The sequence spans 342 residues: Large ribosomal subunit protein uL3 (342 aa).

The interval 1–22 (MGHRKLSSPRRGSAGLRPRKRA) is disordered.

The protein belongs to the universal ribosomal protein uL3 family. Part of the 50S ribosomal subunit. Forms a cluster with proteins L14 and L24e.

Its function is as follows. One of the primary rRNA binding proteins, it binds directly near the 3'-end of the 23S rRNA, where it nucleates assembly of the 50S subunit. This Sulfolobus acidocaldarius (strain ATCC 33909 / DSM 639 / JCM 8929 / NBRC 15157 / NCIMB 11770) protein is Large ribosomal subunit protein uL3.